Here is a 117-residue protein sequence, read N- to C-terminus: Appetite-regulating hormone (117 aa).

The signal sequence occupies residues 1–23; sequence MVSSATICSLLLLSMLWMDMAMA. S26 carries O-decanoyl serine; alternate lipidation. Residue S26 is the site of O-hexanoyl serine; alternate attachment. S26 is lipidated: O-octanoyl serine; alternate. Positions 28–68 are disordered; that stretch reads LSPEHQKAQQRKESKKPPAKLQPRALEGWLHPEDRGQAEEA. A compositionally biased stretch (basic and acidic residues) spans 31–43; that stretch reads EHQKAQQRKESKK. Residues 52 to 75 constitute a propeptide, removed in mature form; it reads ALEGWLHPEDRGQAEEAEEELEIR. At L98 the chain carries Leucine amide. A propeptide spans 99 to 117 (removed in mature form); sequence GKFLQDILWEEVKEAPANK.

It belongs to the motilin family. O-octanoylated by GOAT/MBOAT4. O-octanoylation is essential for ghrelin activity. The replacement of Ser-26 by aromatic tryptophan preserves ghrelin activity. In terms of processing, amidation of Leu-98 is essential for obestatin activity. Ghrelin is broadly expressed with higher expression in the stomach. Very low levels are detected in the hypothalamus, heart, lung, pancreas, intestine and adipose tissue. Obestatin is most highly expressed in jejunum, and also found in duodenum, stomach, pituitary, ileum, liver, hypothalamus and heart. Expressed in low levels in pancreas, cerebellum, cerebrum, kidney, testis, ovary colon and lung.

The protein localises to the secreted. In terms of biological role, ghrelin is the ligand for growth hormone secretagogue receptor type 1 (GHSR). Induces the release of growth hormone from the pituitary. Has an appetite-stimulating effect, induces adiposity and stimulates gastric acid secretion. Involved in growth regulation. Obestatin may be the ligand for GPR39. May have an appetite-reducing effect resulting in decreased food intake. May reduce gastric emptying activity and jejunal motility. The chain is Appetite-regulating hormone (Ghrl) from Rattus norvegicus (Rat).